A 416-amino-acid chain; its full sequence is 1-deoxy-D-xylulose 5-phosphate reductoisomerase (416 aa).

NADPH contacts are provided by Thr-10, Gly-11, Ser-12, Ile-13, Gly-36, Arg-37, Asn-38, and Asn-130. Position 131 (Lys-131) interacts with 1-deoxy-D-xylulose 5-phosphate. Glu-132 serves as a coordination point for NADPH. Residue Asp-156 participates in Mn(2+) binding. Residues Ser-157, Glu-158, Ser-194, and His-217 each coordinate 1-deoxy-D-xylulose 5-phosphate. Position 158 (Glu-158) interacts with Mn(2+). Gly-223 provides a ligand contact to NADPH. Ser-230, Asn-235, Lys-236, and Glu-239 together coordinate 1-deoxy-D-xylulose 5-phosphate. Glu-239 contributes to the Mn(2+) binding site.

This sequence belongs to the DXR family. Mg(2+) is required as a cofactor. Requires Mn(2+) as cofactor.

It catalyses the reaction 2-C-methyl-D-erythritol 4-phosphate + NADP(+) = 1-deoxy-D-xylulose 5-phosphate + NADPH + H(+). The protein operates within isoprenoid biosynthesis; isopentenyl diphosphate biosynthesis via DXP pathway; isopentenyl diphosphate from 1-deoxy-D-xylulose 5-phosphate: step 1/6. Functionally, catalyzes the NADPH-dependent rearrangement and reduction of 1-deoxy-D-xylulose-5-phosphate (DXP) to 2-C-methyl-D-erythritol 4-phosphate (MEP). This chain is 1-deoxy-D-xylulose 5-phosphate reductoisomerase, found in Synechococcus sp. (strain CC9311).